The following is a 102-amino-acid chain: MAETSLRIEVVYATPERQWLLACEVPAGTSVSEALRLSGLAEQVPGLDLPGSPVGIFGKVVSEPAVRLVEEGDRLEVYRPLLADPKETRRQRAAKAKAARER.

This sequence belongs to the UPF0125 (RnfH) family.

The polypeptide is Protein RnfH (Pseudomonas entomophila (strain L48)).